A 710-amino-acid polypeptide reads, in one-letter code: Subtilisin-like protease SBT4.8 (710 aa).

The first 23 residues, 1–23 (MVKRASFCLLSCLIILFLSSVSA), serve as a signal peptide directing secretion. Positions 24-111 (IIYDPQDKQV…VFRSKNYKLQ (88 aa)) are cleaved as a propeptide — activation peptide. The Inhibitor I9 domain occupies 33 to 110 (VYVVYMGSLP…SVFRSKNYKL (78 aa)). The 445-residue stretch at 115–559 (SWDFMGMKEG…AGHVDPIAAI (445 aa)) folds into the Peptidase S8 domain. The active-site Charge relay system is the Asp-143. Asn-174 carries an N-linked (GlcNAc...) asparagine glycan. Residue His-198 is the Charge relay system of the active site. Asn-221, Asn-364, and Asn-419 each carry an N-linked (GlcNAc...) asparagine glycan. Positions 354–414 (KYPLEYGDYL…VLSQDDFDSL (61 aa)) constitute a PA domain. Ser-498 functions as the Charge relay system in the catalytic mechanism. 5 N-linked (GlcNAc...) asparagine glycosylation sites follow: Asn-535, Asn-568, Asn-580, Asn-618, and Asn-636.

Belongs to the peptidase S8 family. The C-terminal propeptide is autocleaved.

It localises to the secreted. This is Subtilisin-like protease SBT4.8 from Arabidopsis thaliana (Mouse-ear cress).